The primary structure comprises 74 residues: Small ribosomal subunit protein eS28 (74 aa).

This sequence belongs to the eukaryotic ribosomal protein eS28 family.

The chain is Small ribosomal subunit protein eS28 from Halorubrum lacusprofundi (strain ATCC 49239 / DSM 5036 / JCM 8891 / ACAM 34).